The sequence spans 633 residues: MHGLLLAAAGLLSLPLHVIAHPQPSTNLAGRGVDLDAYRMADRSSYMNSDDMKLKQPGIASLSGGNYVDTATEVVKRMMPGMTFRMVDDHYVGESGISHVYFRQTMHGMDIDNSDFNVNIGKDGKVLSFGHSFYTGPAPDKAPVEKRDFSDPMKAFHGACKALSLPINADKATVQTMNEHEVMFMGTSGAMSDPQGKLCYMAKEDGTLALTWRVETDMGDNWLLSYVDAKETEKVHNVVDYVSHATYQVYRRALSPDPTEGKRESIENPWNLKTSPFTWISDGKTNYTTTRGNNAIAQANFDGGEDYLNNHRPNNKNLKFEYPYAPNMSPKSYIDASVTQLFYSANMVHDLYYMLGFTEKAGNFQVNNHGQGGKGNDFVILNAQDGSGTNNANFATPPDGKPGRMRVYIWTKAKPARDSSFEAGTVIHEYTHGLSNRLTGGPANAGCLNGMESGGMGEGWGDFFATAIRLKPNDNRNANYVHGEWVNNSPKGNRMYPYSTSLQTNPLVYTSCNKYNEVHAIGTVWGSMLYEVLWNLIDKHGKNDGPTPVFENGVPKDGKYLAMKLVMDGMAIQPCKPTFVQARDAIIDADMNLTKGSNRCEIWKAFAKRGLGVGAKYDPKNRTGNKGLPKDCQ.

A signal peptide spans 1-21; it reads MHGLLLAAAGLLSLPLHVIAH. Positions 22–245 are excised as a propeptide; the sequence is PQPSTNLAGR…HNVVDYVSHA (224 aa). The N-linked (GlcNAc...) asparagine glycan is linked to Asn-286. His-428 provides a ligand contact to Zn(2+). Residue Glu-429 is part of the active site. His-432 lines the Zn(2+) pocket. N-linked (GlcNAc...) asparagine glycans are attached at residues Asn-592 and Asn-621.

This sequence belongs to the peptidase M36 family. It depends on Zn(2+) as a cofactor.

It localises to the secreted. Its function is as follows. Secreted metalloproteinase probably acting as a virulence factor. This is Extracellular metalloproteinase 5 (MEP5) from Arthroderma benhamiae (Trichophyton mentagrophytes).